The sequence spans 442 residues: Trigger factor (442 aa).

Positions 162 to 247 constitute a PPIase FKBP-type domain; it reads GDRMTFDFEG…VKAIESRELP (86 aa).

This sequence belongs to the FKBP-type PPIase family. Tig subfamily.

It is found in the cytoplasm. The catalysed reaction is [protein]-peptidylproline (omega=180) = [protein]-peptidylproline (omega=0). Involved in protein export. Acts as a chaperone by maintaining the newly synthesized protein in an open conformation. Functions as a peptidyl-prolyl cis-trans isomerase. The chain is Trigger factor from Magnetococcus marinus (strain ATCC BAA-1437 / JCM 17883 / MC-1).